A 467-amino-acid polypeptide reads, in one-letter code: Chromosomal replication initiator protein DnaA (467 aa).

Positions 1–87 (MSSSLWLQCL…VGSRPVVAPK (87 aa)) are domain I, interacts with DnaA modulators. Residues 87 to 130 (KPAPVRTAADVAAESSAPAQLAQRKPIHKTWDDDSAAADITHRS) are domain II. The domain III, AAA+ region stretch occupies residues 131-347 (NVNPKHKFNN…GALNRVIANA (217 aa)). ATP-binding residues include Gly175, Gly177, Lys178, and Thr179. The segment at 348–467 (NFTGRPITID…YSNLIRTLSS (120 aa)) is domain IV, binds dsDNA.

This sequence belongs to the DnaA family. Oligomerizes as a right-handed, spiral filament on DNA at oriC.

Its subcellular location is the cytoplasm. In terms of biological role, plays an essential role in the initiation and regulation of chromosomal replication. ATP-DnaA binds to the origin of replication (oriC) to initiate formation of the DNA replication initiation complex once per cell cycle. Binds the DnaA box (a 9 base pair repeat at the origin) and separates the double-stranded (ds)DNA. Forms a right-handed helical filament on oriC DNA; dsDNA binds to the exterior of the filament while single-stranded (ss)DNA is stabiized in the filament's interior. The ATP-DnaA-oriC complex binds and stabilizes one strand of the AT-rich DNA unwinding element (DUE), permitting loading of DNA polymerase. After initiation quickly degrades to an ADP-DnaA complex that is not apt for DNA replication. Binds acidic phospholipids. The chain is Chromosomal replication initiator protein DnaA from Vibrio cholerae serotype O1 (strain ATCC 39315 / El Tor Inaba N16961).